We begin with the raw amino-acid sequence, 113 residues long: Hydrogenase maturation factor HypA (113 aa).

His-2 contributes to the Ni(2+) binding site. 4 residues coordinate Zn(2+): Cys-73, Cys-76, Cys-89, and Cys-92.

It belongs to the HypA/HybF family.

Its function is as follows. Involved in the maturation of [NiFe] hydrogenases. Required for nickel insertion into the metal center of the hydrogenase. This is Hydrogenase maturation factor HypA from Legionella pneumophila subsp. pneumophila (strain Philadelphia 1 / ATCC 33152 / DSM 7513).